The sequence spans 161 residues: Afimbrial adhesin AFA-I (161 aa).

Residues 1-21 (MKKLAIIGATSVMMMTGTAQA) form the signal peptide.

The protein belongs to the Dr-adhesin family.

The protein resides in the fimbrium. Its function is as follows. Hemagglutinins of uropathogenic E.coli mediate adherence to the upper urinary tract. These adhesins bind to the Dr blood group antigen and also agglutinate human erythrocytes in the presence of D-mannose (mannose-resistant hemagglutination (MRHA)). This is Afimbrial adhesin AFA-I (afaE1) from Escherichia coli.